An 811-amino-acid chain; its full sequence is Glycerol-3-phosphate acyltransferase (811 aa).

The HXXXXD motif motif lies at 308-313; that stretch reads CHRSHM.

It belongs to the GPAT/DAPAT family.

The protein resides in the cell inner membrane. It catalyses the reaction sn-glycerol 3-phosphate + an acyl-CoA = a 1-acyl-sn-glycero-3-phosphate + CoA. The protein operates within phospholipid metabolism; CDP-diacylglycerol biosynthesis; CDP-diacylglycerol from sn-glycerol 3-phosphate: step 1/3. The protein is Glycerol-3-phosphate acyltransferase of Pseudoalteromonas atlantica (strain T6c / ATCC BAA-1087).